A 197-amino-acid chain; its full sequence is Large ribosomal subunit protein bL25 (197 aa).

This sequence belongs to the bacterial ribosomal protein bL25 family. CTC subfamily. Part of the 50S ribosomal subunit; part of the 5S rRNA/L5/L18/L25 subcomplex. Contacts the 5S rRNA. Binds to the 5S rRNA independently of L5 and L18.

Functionally, this is one of the proteins that binds to the 5S RNA in the ribosome where it forms part of the central protuberance. The sequence is that of Large ribosomal subunit protein bL25 from Lawsonia intracellularis (strain PHE/MN1-00).